The following is a 101-amino-acid chain: Small ribosomal subunit protein uS14A (101 aa).

It belongs to the universal ribosomal protein uS14 family. In terms of assembly, part of the 30S ribosomal subunit. Contacts proteins S3 and S10.

Functionally, binds 16S rRNA, required for the assembly of 30S particles and may also be responsible for determining the conformation of the 16S rRNA at the A site. This Mycolicibacterium smegmatis (strain ATCC 700084 / mc(2)155) (Mycobacterium smegmatis) protein is Small ribosomal subunit protein uS14A.